Reading from the N-terminus, the 78-residue chain is Omega-conotoxin-like ArMKLT1-011 (78 aa).

The signal sequence occupies residues Met-1–Ala-22. Positions Val-23–Asp-48 are excised as a propeptide. Cystine bridges form between Cys-52/Cys-69, Cys-59/Cys-73, and Cys-68/Cys-77.

The protein belongs to the conotoxin O1 superfamily. In terms of tissue distribution, expressed by the venom duct.

The protein localises to the secreted. In terms of biological role, omega-conotoxins act at presynaptic membranes, they bind and block voltage-gated calcium channels (Cav). In Conus arenatus (Sand-dusted cone), this protein is Omega-conotoxin-like ArMKLT1-011.